Reading from the N-terminus, the 278-residue chain is MCRRPDCGFSFSPGPVVLLWCCLLLPIVSSVAVSVAPTAAEKVPAECPELTRRCLLGEVFQGDKYESWLRPLVNVTGRNGPLSQLIRYRPVTPEAANSVLLDDAFLDTLALLYNNPDQLRALLTLLSSDTAPRWMTVMRGYSECGDGSPAVYTCVDDLCRGYDLTRLSYGRSIFTEHVLGFELVPPSLFNVVVAIRNEATRTNRAVRLPVSTAAAPEGITLFYGLYNAVKEFCLRHQLDPPLLRHLDKYYAGLPPELKQTRVNLPAHSRYGPQAVDAR.

An N-terminal signal peptide occupies residues 1–30; that stretch reads MCRRPDCGFSFSPGPVVLLWCCLLLPIVSS. The region spanning 43–256 is the gL betaherpesvirus-type domain; the sequence is VPAECPELTR…DKYYAGLPPE (214 aa). C154 and C159 are joined by a disulfide.

It belongs to the herpesviridae glycoprotein L (gL) family. Betaherpesvirinae gL subfamily. Interacts with glycoprotein H (gH); this interaction is necessary for the correct processing and cell surface expression of gH. Forms the envelope pentamer complex (PC) composed of gH, gL, UL128, UL130, and UL131A. The pentamer interacts with host NRP2. Forms the envelope trimer complex composed of gH, gL, and gO. The trimer interacts with host PDGFRA. The trimer also interacts with host EPHA2.

Its subcellular location is the virion membrane. The protein resides in the host cell membrane. It localises to the host Golgi apparatus. The protein localises to the host trans-Golgi network. Functionally, the heterodimer glycoprotein H-glycoprotein L is required for the fusion of viral and plasma membranes leading to virus entry into the host cell. Acts as a functional inhibitor of gH and maintains gH in an inhibited form. Upon binding to host integrins, gL dissociates from gH leading to activation of the viral fusion glycoproteins gB and gH. In human cytomegalovirus, forms two distincts complexes to mediate viral entry, a trimer and a pentamer at the surface of the virion envelope. The gH-gL-gO trimer is required for infection in fibroblasts by interacting with host PDGFRA, and in glioblastoma cells by interacting with host EPHA2. The gH-gL-UL128-UL130-UL131A pentamer is essential for viral entry in epithelial, endothelial and myeloid cells via interaction with host NRP2. The chain is Envelope glycoprotein L from Human cytomegalovirus (strain 5040) (HHV-5).